A 394-amino-acid polypeptide reads, in one-letter code: Elongation factor Tu 2 (394 aa).

The region spanning 10 to 204 (KPHVNVGTIG…ALDSYIPEPE (195 aa)) is the tr-type G domain. The interval 19 to 26 (GHVDHGKT) is G1. Position 19–26 (19–26 (GHVDHGKT)) interacts with GTP. Thr-26 provides a ligand contact to Mg(2+). The tract at residues 60–64 (GITIS) is G2. Positions 81–84 (DCPG) are G3. Residues 81-85 (DCPGH) and 136-139 (NKCD) each bind GTP. The segment at 136–139 (NKCD) is G4. Positions 174 to 176 (SAL) are G5.

The protein belongs to the TRAFAC class translation factor GTPase superfamily. Classic translation factor GTPase family. EF-Tu/EF-1A subfamily. Monomer.

The protein resides in the cytoplasm. It carries out the reaction GTP + H2O = GDP + phosphate + H(+). Its function is as follows. GTP hydrolase that promotes the GTP-dependent binding of aminoacyl-tRNA to the A-site of ribosomes during protein biosynthesis. The sequence is that of Elongation factor Tu 2 from Photorhabdus laumondii subsp. laumondii (strain DSM 15139 / CIP 105565 / TT01) (Photorhabdus luminescens subsp. laumondii).